The sequence spans 106 residues: uncharacterized protein (106 aa).

Transmembrane regions (helical) follow at residues 46–68 (LLQEIILFVFCALMVVSAAILAF) and 73–92 (AVFIVLQVCVLAVLPILIAA).

Its subcellular location is the cell membrane. This is an uncharacterized protein from Bacillus subtilis (strain 168).